Consider the following 111-residue polypeptide: uncharacterized protein (111 aa).

Residues 43–72 (NGRAEETEADAPLPEEPSLPDLPDLSDLDS) are disordered. A compositionally biased stretch (low complexity) spans 61–72 (LPDLPDLSDLDS).

This is an uncharacterized protein from Homo sapiens (Human).